A 236-amino-acid polypeptide reads, in one-letter code: Phycocyanobilin:ferredoxin oxidoreductase (236 aa).

This sequence belongs to the HY2 family.

It catalyses the reaction (2R,3Z)-phycocyanobilin + 4 oxidized [2Fe-2S]-[ferredoxin] = biliverdin IXalpha + 4 reduced [2Fe-2S]-[ferredoxin] + 4 H(+). Its function is as follows. Catalyzes the four-electron reduction of biliverdin IX-alpha (2-electron reduction at both the A and D rings); the reaction proceeds via an isolatable 2-electron intermediate, 181,182-dihydrobiliverdin. The polypeptide is Phycocyanobilin:ferredoxin oxidoreductase (pcyA) (Thermosynechococcus vestitus (strain NIES-2133 / IAM M-273 / BP-1)).